The primary structure comprises 472 residues: Phosphoenolpyruvate carboxylase (472 aa).

It belongs to the PEPCase type 2 family. As to quaternary structure, homotetramer. Mg(2+) is required as a cofactor.

It carries out the reaction oxaloacetate + phosphate = phosphoenolpyruvate + hydrogencarbonate. Catalyzes the irreversible beta-carboxylation of phosphoenolpyruvate (PEP) to form oxaloacetate (OAA), a four-carbon dicarboxylic acid source for the tricarboxylic acid cycle. This is Phosphoenolpyruvate carboxylase from Pyrococcus furiosus (strain ATCC 43587 / DSM 3638 / JCM 8422 / Vc1).